Here is a 503-residue protein sequence, read N- to C-terminus: DEAD-box ATP-dependent RNA helicase CshA (503 aa).

The Q motif motif lies at 2 to 30 (QNFKELGISDKTVETLEAMGFKEPTPIQK). The Helicase ATP-binding domain maps to 33–203 (IPYTLEGKDI…QQFMKSPQIV (171 aa)). 46–53 (AQTGTGKT) lines the ATP pocket. Residues 150–153 (DEAD) carry the DEAD box motif. In terms of domain architecture, Helicase C-terminal spans 214 to 375 (QIDEYYTIVK…LRPPHRKEVL (162 aa)). The segment at 436–503 (EKPLARKNRQ…KGRTFADLQK (68 aa)) is disordered. Positions 466-480 (KRSKGNFNKKKGKKT) are enriched in basic residues. The span at 481-490 (DRRERQDKGR) shows a compositional bias: basic and acidic residues.

The protein belongs to the DEAD box helicase family. CshA subfamily. In terms of assembly, oligomerizes, may be a member of the RNA degradosome.

The protein resides in the cytoplasm. It carries out the reaction ATP + H2O = ADP + phosphate + H(+). Functionally, DEAD-box RNA helicase possibly involved in RNA degradation. Unwinds dsRNA in both 5'- and 3'-directions, has RNA-dependent ATPase activity. The protein is DEAD-box ATP-dependent RNA helicase CshA of Staphylococcus haemolyticus (strain JCSC1435).